The following is a 165-amino-acid chain: PTS system glucose-specific EIIA component (165 aa).

Residues 34 to 138 (DPVFAQKMMG…SSITPIIISN (105 aa)) enclose the PTS EIIA type-1 domain. The Zn(2+) site is built by His71 and His86. The active-site Tele-phosphohistidine intermediate; for EIIA activity is His86. A Phosphohistidine; by HPr modification is found at His86.

As to quaternary structure, heterodimer with glycerol kinase (glpk). Requires Zn(2+) as cofactor.

It localises to the cytoplasm. In terms of biological role, the phosphoenolpyruvate-dependent sugar phosphotransferase system (sugar PTS), a major carbohydrate active transport system, catalyzes the phosphorylation of incoming sugar substrates concomitantly with their translocation across the cell membrane. The enzyme II complex composed of PtsG and Crr is involved in glucose transport. This Oceanobacillus iheyensis (strain DSM 14371 / CIP 107618 / JCM 11309 / KCTC 3954 / HTE831) protein is PTS system glucose-specific EIIA component (crr).